We begin with the raw amino-acid sequence, 639 residues long: Signal recognition particle receptor subunit alpha (639 aa).

A disordered region spans residues 132–317 (APTTMKKFED…STKPSATKGT (186 aa)). Composition is skewed to basic and acidic residues over residues 137-146 (KKFEDSEKAK) and 153-165 (IETR…EKAK). Ser178 bears the Phosphoserine mark. Basic and acidic residues predominate over residues 204–240 (ELSKEEQIRRKREEFIQKHGRGMEKSSKSSKSDAPKE). Phosphothreonine is present on Thr285. 3 positions are modified to phosphoserine: Ser297, Ser298, and Ser299. Over residues 305–315 (AQNSTKPSATK) the composition is skewed to polar residues. The segment at 420 to 637 (YVVTFCGVNG…NAKAVVAALM (218 aa)) is NG domain. 426–433 (GVNGVGKS) provides a ligand contact to GTP. Residue Ser474 is modified to Phosphoserine. GTP is bound at residue 521–525 (DTAGR). A Phosphothreonine modification is found at Thr579. Residue 589–592 (TKFD) participates in GTP binding.

This sequence belongs to the GTP-binding SRP family. Heterodimer with SRPRB. Interacts with the signal recognition particle (SRP) complex subunit SRP54.

It localises to the endoplasmic reticulum membrane. Functionally, component of the SRP (signal recognition particle) receptor. Ensures, in conjunction with the signal recognition particle, the correct targeting of the nascent secretory proteins to the endoplasmic reticulum membrane system. Forms a guanosine 5'-triphosphate (GTP)-dependent complex with the SRP subunit SRP54. SRP receptor compaction and GTPase rearrangement drive SRP-mediated cotranslational protein translocation into the ER. In Bos taurus (Bovine), this protein is Signal recognition particle receptor subunit alpha.